We begin with the raw amino-acid sequence, 430 residues long: Cholecystokinin receptor type A (430 aa).

Residues 1–41 are Extracellular-facing; sequence MDVVDSLFVNGSNITSACELGFENETLFCLDRPRPSKEWQP. Asparagine 10, asparagine 13, and asparagine 24 each carry an N-linked (GlcNAc...) asparagine glycan. Residues cysteine 18 and cysteine 29 are joined by a disulfide bond. Residues 42-67 form a helical membrane-spanning segment; it reads AVQILLYSLIFLLSVLGNTLVITVLI. At 68–77 the chain is on the cytoplasmic side; that stretch reads RNKRMRTVTN. The helical transmembrane segment at 78–104 threads the bilayer; that stretch reads IFLLSLAVSDLMLCLFCMPFNLIPSLL. The Extracellular portion of the chain corresponds to 105–115; that stretch reads KDFIFGSAVCK. Residues cysteine 114 and cysteine 196 are joined by a disulfide bond. A helical membrane pass occupies residues 116–137; it reads TTTYFMGTSVSVSTFNLVAISL. The Cytoplasmic portion of the chain corresponds to 138–157; that stretch reads ERYGAICKPLQSRVWQTKSH. The helical transmembrane segment at 158–178 threads the bilayer; it reads ALKVIAATWCLSFTIMTPYPI. Topologically, residues 179-210 are extracellular; the sequence is YSNLVPFTKNNNQTGNMCRFLLPNDVMQQTWH. Residue asparagine 190 is glycosylated (N-linked (GlcNAc...) asparagine). Residues 211–234 traverse the membrane as a helical segment; sequence TFLLLILFLIPGIVMMVAYGLISL. At 235 to 315 the chain is on the cytoplasmic side; sequence ELYQGIKFDA…NLMAKKRVIR (81 aa). Residues 316–336 form a helical membrane-spanning segment; that stretch reads MLIVIVVLFFLCWMPIFSANA. Residues 337-351 lie on the Extracellular side of the membrane; the sequence is WRAYDTVSAERHLSG. The helical transmembrane segment at 352-375 threads the bilayer; the sequence is TPISFILLLSYTSSCVNPIIYCFM. Residues 376–430 lie on the Cytoplasmic side of the membrane; the sequence is NKRFRLGFMATFPCCPNPGTPGVRGEMGEEEEGRTTGASLSRYSYSHMSTSAPPP. Cysteine 389 is lipidated: S-palmitoyl cysteine. The interval 396–430 is disordered; that stretch reads PGVRGEMGEEEEGRTTGASLSRYSYSHMSTSAPPP. Polar residues predominate over residues 413–430; the sequence is ASLSRYSYSHMSTSAPPP.

Belongs to the G-protein coupled receptor 1 family.

The protein localises to the cell membrane. Its function is as follows. Receptor for cholecystokinin. Mediates pancreatic growth and enzyme secretion, smooth muscle contraction of the gall bladder and stomach. Has a 1000-fold higher affinity for CCK rather than for gastrin. It modulates feeding and dopamine-induced behavior in the central and peripheral nervous system. This receptor mediates its action by association with G proteins that activate a phosphatidylinositol-calcium second messenger system. The sequence is that of Cholecystokinin receptor type A (CCKAR) from Cavia porcellus (Guinea pig).